The sequence spans 433 residues: Glutamate-1-semialdehyde 2,1-aminomutase (433 aa).

Residue Lys-271 is modified to N6-(pyridoxal phosphate)lysine.

Belongs to the class-III pyridoxal-phosphate-dependent aminotransferase family. HemL subfamily. As to quaternary structure, homodimer. Pyridoxal 5'-phosphate serves as cofactor.

It localises to the cytoplasm. It carries out the reaction (S)-4-amino-5-oxopentanoate = 5-aminolevulinate. The protein operates within porphyrin-containing compound metabolism; protoporphyrin-IX biosynthesis; 5-aminolevulinate from L-glutamyl-tRNA(Glu): step 2/2. Its pathway is porphyrin-containing compound metabolism; chlorophyll biosynthesis. This Prochlorococcus marinus (strain MIT 9301) protein is Glutamate-1-semialdehyde 2,1-aminomutase.